The primary structure comprises 238 residues: Cysteine-rich venom protein (238 aa).

The first 19 residues, Met-1–Gly-19, serve as a signal peptide directing secretion. A propeptide spanning residues Thr-20 to Ser-27 is cleaved from the precursor. Positions Lys-39–Tyr-164 constitute an SCP domain. 8 disulfides stabilise this stretch: Cys-75–Cys-153, Cys-92–Cys-165, Cys-148–Cys-162, Cys-184–Cys-191, Cys-187–Cys-196, Cys-200–Cys-233, Cys-209–Cys-227, and Cys-218–Cys-231. In terms of domain architecture, ShKT spans Cys-200–Cys-233.

The protein belongs to the CRISP family. In terms of tissue distribution, expressed by the venom gland.

It localises to the secreted. Functionally, blocks olfactory (CNGA2) and retinal (CNGA1) cyclic nucleotide-gated (CNG) ion channel currents. Does not inhibit retinal (CNGA3) currents. It forms high-affinity contacts with the pore turret region and most likely inhibits CNG channel current by blocking the external entrance to the transmembrane pore. Does not affect neither depolarization- nor caffeine-induced contraction arterial smooth muscle. In Demansia vestigiata (Lesser black whip snake), this protein is Cysteine-rich venom protein.